Consider the following 77-residue polypeptide: Cell division topological specificity factor (77 aa).

Belongs to the MinE family.

In terms of biological role, prevents the cell division inhibition by proteins MinC and MinD at internal division sites while permitting inhibition at polar sites. This ensures cell division at the proper site by restricting the formation of a division septum at the midpoint of the long axis of the cell. This is Cell division topological specificity factor from Nautilia profundicola (strain ATCC BAA-1463 / DSM 18972 / AmH).